The primary structure comprises 372 residues: Cobalt-precorrin-5B C(1)-methyltransferase (372 aa).

The protein belongs to the CbiD family.

It catalyses the reaction Co-precorrin-5B + S-adenosyl-L-methionine = Co-precorrin-6A + S-adenosyl-L-homocysteine. Its pathway is cofactor biosynthesis; adenosylcobalamin biosynthesis; cob(II)yrinate a,c-diamide from sirohydrochlorin (anaerobic route): step 6/10. Catalyzes the methylation of C-1 in cobalt-precorrin-5B to form cobalt-precorrin-6A. The sequence is that of Cobalt-precorrin-5B C(1)-methyltransferase from Geobacillus kaustophilus (strain HTA426).